A 422-amino-acid polypeptide reads, in one-letter code: Elongation factor 1-alpha (422 aa).

Positions 5-221 (KPHMNLAVIG…NNLKVPEKPS (217 aa)) constitute a tr-type G domain. Residues 14–21 (GHIDHGKS) are G1. A GTP-binding site is contributed by 14-21 (GHIDHGKS). S21 contributes to the Mg(2+) binding site. The G2 stretch occupies residues 70-74 (GITID). Positions 91-94 (DCPG) are G3. Residues 91 to 95 (DCPGH) and 146 to 149 (NKMD) contribute to the GTP site. The interval 146-149 (NKMD) is G4. Residues 185–187 (SAF) form a G5 region.

The protein belongs to the TRAFAC class translation factor GTPase superfamily. Classic translation factor GTPase family. EF-Tu/EF-1A subfamily.

It localises to the cytoplasm. It catalyses the reaction GTP + H2O = GDP + phosphate + H(+). Its function is as follows. GTP hydrolase that promotes the GTP-dependent binding of aminoacyl-tRNA to the A-site of ribosomes during protein biosynthesis. The polypeptide is Elongation factor 1-alpha (Methanosarcina barkeri (strain Fusaro / DSM 804)).